We begin with the raw amino-acid sequence, 78 residues long: Large ribosomal subunit protein eL20 (78 aa).

This sequence belongs to the eukaryotic ribosomal protein eL20 family. In terms of assembly, part of the 50S ribosomal subunit. Binds 23S rRNA.

This is Large ribosomal subunit protein eL20 from Pyrobaculum islandicum (strain DSM 4184 / JCM 9189 / GEO3).